Reading from the N-terminus, the 652-residue chain is Probable serine/threonine-protein kinase mkcD (652 aa).

Disordered stretches follow at residues 1–47 (MNNI…RKNK), 163–198 (NPIDENDKINSKSINDGDDNGGGSGGGGDNSPLTNV), and 257–289 (QQKLKQEQQQEQQQQQEDEPNKSPVSTSSTLSP). The segment covering 182-191 (NGGGSGGGGD) has biased composition (gly residues). A coiled-coil region spans residues 231 to 275 (KNNQNLHHKQQQLQQLQQLKQQHLQQQQKLKQEQQQEQQQQQEDE). The segment covering 257–271 (QQKLKQEQQQEQQQQ) has biased composition (low complexity). Positions 279–289 (SPVSTSSTLSP) are enriched in polar residues. Residues 369 to 626 (FKNLDFEARG…SSQLLQHPFL (258 aa)) form the Protein kinase domain. Residues 375-383 (EARGGFGSV) and K403 contribute to the ATP site. The active-site Proton acceptor is the D494.

Belongs to the protein kinase superfamily. STE Ser/Thr protein kinase family. STE20 subfamily. Mg(2+) is required as a cofactor.

The enzyme catalyses L-seryl-[protein] + ATP = O-phospho-L-seryl-[protein] + ADP + H(+). The catalysed reaction is L-threonyl-[protein] + ATP = O-phospho-L-threonyl-[protein] + ADP + H(+). In Dictyostelium discoideum (Social amoeba), this protein is Probable serine/threonine-protein kinase mkcD.